The primary structure comprises 213 residues: tRNA (guanine-N(7)-)-methyltransferase (213 aa).

The S-adenosyl-L-methionine site is built by Glu43, Asp68, Asn95, and Asn117. Residues Asp153 and 190-193 (TEYE) contribute to the substrate site.

The protein belongs to the class I-like SAM-binding methyltransferase superfamily. TrmB family.

The catalysed reaction is guanosine(46) in tRNA + S-adenosyl-L-methionine = N(7)-methylguanosine(46) in tRNA + S-adenosyl-L-homocysteine. Its pathway is tRNA modification; N(7)-methylguanine-tRNA biosynthesis. Catalyzes the formation of N(7)-methylguanine at position 46 (m7G46) in tRNA. This is tRNA (guanine-N(7)-)-methyltransferase from Desulfitobacterium hafniense (strain DSM 10664 / DCB-2).